Consider the following 591-residue polypeptide: MSVSLVVIRLELAGHSPVPTDFGFSAAAGEMSDEEIKKKTLASAVACLEGKSAGEKAAIIHQHLGRREMTDVIIETMKARADEVRDTVEEKKPSAAPVSAQRSREQSESVNTAPESPSKQLPDQISFFSGNPSVEIVHGIMHLYKTNKMTSLKEDVRRSAMLCVLTVPATMTSHDLMKFVAPFNDVIEQMKIIRDSTPNQYMVLIKFSAQADADSFYMACNGRQFNSIEDDVCQLVYVERAEVLKSEDGASLPVMDLTELPKCTVCLERMDESVNGILTTLCNHSFHSQCLQRWDDTTCPVCRYCQTPEPVEENKCFECGVQENLWICLICGHIGCGRYVSRHAYKHFEETQHTYAMQLTNHRVWDYAGDNYVHRLVASKTDGKIVQYECEGDTCQEEKIDALQLEYSYLLTSQLESQRIYWENKIVRIEKDTAEEINNMKTKFKETIEKCDSLELRLSDLLKEKQSVERKCTQLNTRVAKLSTELQEEQELNKCLRANQLVLQNQLKEEEKLLKETCAQKDLQITEIQEQLRDVMFYLETQQQISHLPAETRQEIQEGQINIAMASAPNPPSSGAGGKLQSRKGRSKRGK.

Position 52 is a phosphoserine (Ser-52). Basic and acidic residues predominate over residues 82 to 93; it reads DEVRDTVEEKKP. The disordered stretch occupies residues 82 to 124; it reads DEVRDTVEEKKPSAAPVSAQRSREQSESVNTAPESPSKQLPDQ. Residues 108–124 are compositionally biased toward polar residues; it reads ESVNTAPESPSKQLPDQ. A phosphoserine mark is found at Ser-116 and Ser-118. The RING-type zinc finger occupies 263–303; it reads CTVCLERMDESVNGILTTLCNHSFHSQCLQRWDDTTCPVCR. Residues 300–392 form a UBP-type; degenerate zinc finger; it reads PVCRYCQTPE…GKIVQYECEG (93 aa). The Zn(2+) site is built by Cys-316, Cys-319, Cys-328, Cys-331, Cys-336, His-343, His-347, and His-353. Positions 430–536 form a coiled coil; the sequence is EKDTAEEINN…EIQEQLRDVM (107 aa). Positions 563–591 are disordered; sequence IAMASAPNPPSSGAGGKLQSRKGRSKRGK. Residues 581-591 are compositionally biased toward basic residues; that stretch reads QSRKGRSKRGK.

Interacts with the nuclear localization signal of BRCA1 and with the N-terminal of KSR1. The C-terminal portion of BRCA1 interacts with DDB1. As to expression, isoform 2 is highly expressed in testis, lower levels in brain, heart, lung, stomach, colon, uterus, liver and kidney. Isoform 1 is only expressed in the testis. Isoform 2 is predominant over isoform 1 in both fetal and adult testis.

It is found in the cytoplasm. The catalysed reaction is S-ubiquitinyl-[E2 ubiquitin-conjugating enzyme]-L-cysteine + [acceptor protein]-L-lysine = [E2 ubiquitin-conjugating enzyme]-L-cysteine + N(6)-ubiquitinyl-[acceptor protein]-L-lysine.. It participates in protein modification; protein ubiquitination. Its function is as follows. Negatively regulates MAP kinase activation by limiting the formation of Raf/MEK complexes probably by inactivation of the KSR1 scaffold protein. Also acts as a Ras responsive E3 ubiquitin ligase that, on activation of Ras, is modified by auto-polyubiquitination resulting in the release of inhibition of Raf/MEK complex formation. May also act as a cytoplasmic retention protein with a role in regulating nuclear transport. This chain is BRCA1-associated protein, found in Mus musculus (Mouse).